A 121-amino-acid polypeptide reads, in one-letter code: Large ribosomal subunit protein uL14 (121 aa).

Belongs to the universal ribosomal protein uL14 family. As to quaternary structure, part of the 50S ribosomal subunit. Forms a cluster with proteins L3 and L19. In the 70S ribosome, L14 and L19 interact and together make contacts with the 16S rRNA in bridges B5 and B8.

Functionally, binds to 23S rRNA. Forms part of two intersubunit bridges in the 70S ribosome. The polypeptide is Large ribosomal subunit protein uL14 (Prochlorococcus marinus (strain SARG / CCMP1375 / SS120)).